A 115-amino-acid chain; its full sequence is uncharacterized protein (115 aa).

Over 1 to 11 (MKLTKEKKNDC) the chain is Cytoplasmic. The helical transmembrane segment at 12 to 32 (LVGVSYIPPLNFFTLTFLFLL) threads the bilayer. Topologically, residues 33–52 (RIEKVHLSLSLSLSLSLRFY) are extracellular. The chain crosses the membrane as a helical span at residues 53 to 73 (YFHNVCYPSLFLFFCFVIPFF). Topologically, residues 74 to 78 (YSVRF) are cytoplasmic. A helical transmembrane segment spans residues 79–98 (ILLYLHILRSFYELNILLLY). The Extracellular portion of the chain corresponds to 99-115 (GAENSRRQSPPGYYVIR).

It is found in the membrane. This is an uncharacterized protein from Saccharomyces cerevisiae (strain ATCC 204508 / S288c) (Baker's yeast).